Here is a 479-residue protein sequence, read N- to C-terminus: Spindly-like protein spdl-1 (479 aa).

3 coiled-coil regions span residues 4-180 (DEEK…EGEL), 210-250 (EEDL…RFNV), and 321-357 (LMKDNEKYVTIIRGLQQEVENLKADIVQLQFDNKCAH).

Interacts with Zwilch homolog zwl-1, a component of the RZZ complex. Interacts with mdf-1 and mdf-2.

Its subcellular location is the chromosome. It localises to the centromere. It is found in the kinetochore. The protein resides in the cytoplasm. The protein localises to the cytoskeleton. Its subcellular location is the spindle pole. Its function is as follows. Transient kinetochore component required for chromosome and spindle pole alignment and chromosome segregation during mitosis. Functions downstream of the RZZ complex to mediate kinetochore-microtubule attachments and nuclear envelope breakdown during cell division. Required for kinetochore assembly and localizes the checkpoint proteins mdf-1 and mdf-2, dynein and dynactin to unattached kinetochores. Dynein is believed to control the initial lateral interaction between the kinetochore and spindle microtubules and to facilitate the subsequent formation of end-on kinetochore-microtubule attachments mediated by the NDC80 complex. Required for embryonic development. This chain is Spindly-like protein spdl-1, found in Caenorhabditis elegans.